Here is a 178-residue protein sequence, read N- to C-terminus: Thymidine kinase (178 aa).

An ATP-binding site is contributed by 13 to 20 (GPMFAGKS). Glu-85 serves as the catalytic Proton acceptor. Substrate is bound at residue Phe-115. The Zn(2+) site is built by Cys-140 and Cys-143. 159-163 (IEVIG) provides a ligand contact to substrate. Zn(2+)-binding residues include Cys-172 and Cys-175.

The protein belongs to the thymidine kinase family.

The enzyme catalyses thymidine + ATP = dTMP + ADP + H(+). The protein is Thymidine kinase (TK) of Oryctolagus cuniculus (Rabbit).